The primary structure comprises 299 residues: Recombination-associated protein RdgC (299 aa).

It belongs to the RdgC family.

The protein localises to the cytoplasm. It localises to the nucleoid. Functionally, may be involved in recombination. This is Recombination-associated protein RdgC from Cupriavidus necator (strain ATCC 17699 / DSM 428 / KCTC 22496 / NCIMB 10442 / H16 / Stanier 337) (Ralstonia eutropha).